We begin with the raw amino-acid sequence, 216 residues long: Vascular endothelial growth factor A (216 aa).

The first 26 residues, 1–26 (MNFLLTWIHWGLAALLYFHNAKVLQA), serve as a signal peptide directing secretion. 3 cysteine pairs are disulfide-bonded: C52-C94, C83-C128, and C87-C130. The N-linked (GlcNAc...) asparagine glycan is linked to N101. The disordered stretch occupies residues 140–161 (QEKKSKREKGKGQKRKRKRGRY). The segment covering 145–161 (KREKGKGQKRKRKRGRY) has biased composition (basic residues).

It belongs to the PDGF/VEGF growth factor family. Homodimer; disulfide-linked. Also found as heterodimer with PGF. Interacts to the FLT1/VEGFR1 and KDR/VEGFR2 receptors, heparan sulfate and heparin. Expressed in venom gland, heart, brain, liver, skeletal muscle and kidney.

It localises to the secreted. Growth factor active in angiogenesis, vasculogenesis and endothelial cell growth. Induces endothelial cell proliferation, promotes cell migration, inhibits apoptosis and induces permeabilization of blood vessels. The sequence is that of Vascular endothelial growth factor A from Protobothrops flavoviridis (Habu).